Consider the following 525-residue polypeptide: ATP synthase subunit alpha (525 aa).

171–178 (GDRQTGKS) serves as a coordination point for ATP.

Belongs to the ATPase alpha/beta chains family. As to quaternary structure, F-type ATPases have 2 components, CF(1) - the catalytic core - and CF(0) - the membrane proton channel. CF(1) has five subunits: alpha(3), beta(3), gamma(1), delta(1), epsilon(1). CF(0) has three main subunits: a(1), b(2) and c(9-12). The alpha and beta chains form an alternating ring which encloses part of the gamma chain. CF(1) is attached to CF(0) by a central stalk formed by the gamma and epsilon chains, while a peripheral stalk is formed by the delta and b chains.

It localises to the cell inner membrane. It carries out the reaction ATP + H2O + 4 H(+)(in) = ADP + phosphate + 5 H(+)(out). Functionally, produces ATP from ADP in the presence of a proton gradient across the membrane. The alpha chain is a regulatory subunit. The chain is ATP synthase subunit alpha from Flavobacterium psychrophilum (strain ATCC 49511 / DSM 21280 / CIP 103535 / JIP02/86).